The sequence spans 492 residues: MNNLVKLTISQAISGLKNKEFTATDLVTAHINQMDKYRCINAYITEIPELALQAAKKSDFLIQTNQARPIEGIPVSIKDLFCTKGILTTAASKMLQNFTPVYDATVYSKIINAGGIMLGKGNMDEFAMGSANINSYFGNVINPWKAENDDIDLTPGGSSGGSSAAVAAFMAMAALGSDTGGSVRQPASYTGTVGIKPSYGRCSRWGMIAFSCSLDQAGIITRTVEDAAIMLETMMGYDEKDSTSLNVEVPNLRSAVNQPIKGMKIGIPYDLMENKSLSSEIITMWQNTINLLKDHGVEIVSISLPYINYALPVYYVLSSAEASSNLARYDGVRYGLRVEGKNSNINEIYELSRSEGFGAEVKRRIMMGTYALASTNINSYYIKAQQVRRLIVNDFTNSFNKVDCILIPSAPTAAFPLNSNQDDPVTMYLNDILTIPASLAGLPCISIPAGFSANKLPLGMQVIGSRLDEYNIIKISSAIEKALNLKFIPKGF.

Active-site charge relay system residues include K78 and S158. S182 acts as the Acyl-ester intermediate in catalysis.

This sequence belongs to the amidase family. GatA subfamily. As to quaternary structure, heterotrimer of A, B and C subunits.

It carries out the reaction L-glutamyl-tRNA(Gln) + L-glutamine + ATP + H2O = L-glutaminyl-tRNA(Gln) + L-glutamate + ADP + phosphate + H(+). Its function is as follows. Allows the formation of correctly charged Gln-tRNA(Gln) through the transamidation of misacylated Glu-tRNA(Gln) in organisms which lack glutaminyl-tRNA synthetase. The reaction takes place in the presence of glutamine and ATP through an activated gamma-phospho-Glu-tRNA(Gln). The sequence is that of Glutamyl-tRNA(Gln) amidotransferase subunit A from Orientia tsutsugamushi (strain Ikeda) (Rickettsia tsutsugamushi).